The sequence spans 159 residues: ATP synthase subunit b 1 (159 aa).

Residues 5-25 traverse the membrane as a helical segment; that stretch reads FWAFIGLILFLALLFYFKVPA.

It belongs to the ATPase B chain family. In terms of assembly, F-type ATPases have 2 components, F(1) - the catalytic core - and F(0) - the membrane proton channel. F(1) has five subunits: alpha(3), beta(3), gamma(1), delta(1), epsilon(1). F(0) has three main subunits: a(1), b(2) and c(10-14). The alpha and beta chains form an alternating ring which encloses part of the gamma chain. F(1) is attached to F(0) by a central stalk formed by the gamma and epsilon chains, while a peripheral stalk is formed by the delta and b chains.

The protein resides in the cell inner membrane. In terms of biological role, f(1)F(0) ATP synthase produces ATP from ADP in the presence of a proton or sodium gradient. F-type ATPases consist of two structural domains, F(1) containing the extramembraneous catalytic core and F(0) containing the membrane proton channel, linked together by a central stalk and a peripheral stalk. During catalysis, ATP synthesis in the catalytic domain of F(1) is coupled via a rotary mechanism of the central stalk subunits to proton translocation. Component of the F(0) channel, it forms part of the peripheral stalk, linking F(1) to F(0). This is ATP synthase subunit b 1 from Bartonella bacilliformis (strain ATCC 35685 / KC583 / Herrer 020/F12,63).